We begin with the raw amino-acid sequence, 1024 residues long: Carbamoyl phosphate synthase large chain (1024 aa).

The segment at 1 to 396 (MDIKKILVIG…AWQKAVRMID (396 aa)) is carboxyphosphate synthetic domain. ATP is bound by residues Arg-125, Arg-165, Gly-171, Gly-172, Lys-204, Leu-206, Glu-211, Gly-237, Val-238, His-239, Gln-280, and Glu-294. An ATP-grasp 1 domain is found at 129-323 (QKAMREAGIP…LAYIAAKLAL (195 aa)). Mg(2+)-binding residues include Gln-280, Glu-294, and Asn-296. Residues Gln-280, Glu-294, and Asn-296 each contribute to the Mn(2+) site. Residues 397–536 (IGEPGLVGGP…LTYGGQYDDK (140 aa)) form an oligomerization domain region. Residues 536–917 (KTPGVDYLVV…LKSWLSATPN (382 aa)) form a carbamoyl phosphate synthetic domain region. An ATP-grasp 2 domain is found at 660–849 (SKLLDRLGIK…YMSLVADVLT (190 aa)). The ATP site is built by Arg-696, Lys-735, Glu-742, Gly-766, Val-767, His-768, Ser-769, Gln-809, and Glu-820. Mg(2+)-binding residues include Gln-809, Glu-820, and Asn-822. Positions 809, 820, and 822 each coordinate Mn(2+). In terms of domain architecture, MGS-like spans 917 to 1024 (NKIPSKTALI…KNGKLEVAPW (108 aa)). The segment at 918-1024 (KIPSKTALIY…KNGKLEVAPW (107 aa)) is allosteric domain.

The protein belongs to the CarB family. In terms of assembly, composed of two chains; the small (or glutamine) chain promotes the hydrolysis of glutamine to ammonia, which is used by the large (or ammonia) chain to synthesize carbamoyl phosphate. Tetramer of heterodimers (alpha,beta)4. It depends on Mg(2+) as a cofactor. Mn(2+) is required as a cofactor.

It catalyses the reaction hydrogencarbonate + L-glutamine + 2 ATP + H2O = carbamoyl phosphate + L-glutamate + 2 ADP + phosphate + 2 H(+). The enzyme catalyses hydrogencarbonate + NH4(+) + 2 ATP = carbamoyl phosphate + 2 ADP + phosphate + 2 H(+). It participates in amino-acid biosynthesis; L-arginine biosynthesis; carbamoyl phosphate from bicarbonate: step 1/1. It functions in the pathway pyrimidine metabolism; UMP biosynthesis via de novo pathway; (S)-dihydroorotate from bicarbonate: step 1/3. Large subunit of the glutamine-dependent carbamoyl phosphate synthetase (CPSase). CPSase catalyzes the formation of carbamoyl phosphate from the ammonia moiety of glutamine, carbonate, and phosphate donated by ATP, constituting the first step of 2 biosynthetic pathways, one leading to arginine and/or urea and the other to pyrimidine nucleotides. The large subunit (synthetase) binds the substrates ammonia (free or transferred from glutamine from the small subunit), hydrogencarbonate and ATP and carries out an ATP-coupled ligase reaction, activating hydrogencarbonate by forming carboxy phosphate which reacts with ammonia to form carbamoyl phosphate. The sequence is that of Carbamoyl phosphate synthase large chain from Pyrobaculum aerophilum (strain ATCC 51768 / DSM 7523 / JCM 9630 / CIP 104966 / NBRC 100827 / IM2).